Consider the following 872-residue polypeptide: TATA box-binding protein-associated factor RNA polymerase I subunit B (872 aa).

An RRN7-type zinc finger spans residues 6–40 (ETMQLENMHCDVCEGTTFQEREGFYYCVECGTQKD). Residues Cys15, Cys18, Cys32, and Cys35 each contribute to the Zn(2+) site. The interval 41–72 (QIRAVDITAEDNFDDTAAGRYTARTIRQKKDT) is B-reader. Residues 73 to 84 (EKEDEDDITSWE) are B-linker. Positions 85-312 (FYNYVLRGFL…LPGNVAAKGK (228 aa)) are N-terminal cyclin fold. The disordered stretch occupies residues 187-206 (DASGYRSHGGASESEGEQSL).

This sequence belongs to the RRN7/TAF1B family.

The protein resides in the nucleus. Its subcellular location is the nucleolus. In terms of biological role, component of RNA polymerase I core factor complex that acts as a GTF2B/TFIIB-like factor and plays a key role in multiple steps during transcription initiation such as pre-initiation complex (PIC) assembly and postpolymerase recruitment events in polymerase I (Pol I) transcription. Binds rDNA promoters and plays a role in Pol I recruitment. The chain is TATA box-binding protein-associated factor RNA polymerase I subunit B from Drosophila melanogaster (Fruit fly).